We begin with the raw amino-acid sequence, 503 residues long: 12-dehydrotetracycline 5-monooxygenase/anhydrotetracycline 6-monooxygenase (503 aa).

FAD is bound by residues threonine 13, 32 to 33, leucine 44, glutamine 99, valine 123, threonine 160, aspartate 288, and 301 to 302; these read ER and LN.

It belongs to the PheA/TfdB FAD monooxygenase family. In terms of assembly, monomer. It depends on FAD as a cofactor.

It carries out the reaction 5a,11a-dehydrotetracycline + NADPH + O2 + H(+) = 5a,11a-dehydrooxytetracycline + NADP(+) + H2O. The enzyme catalyses anhydrotetracycline + NADPH + O2 + H(+) = 5a,11a-dehydrotetracycline + NADP(+) + H2O. It functions in the pathway antibiotic biosynthesis; oxytetracycline biosynthesis. Involved in the biosynthesis of the antibiotics oxytetracycline and tetracycline. OxyS starts by catalyzing the stereospecific hydroxylation of anhydrotetracycline at C(6) position to yield 5a,11a-dehydrotetracycline (12-dehydrotetracycline). If the released product is captured by OxyR, it is reduced to tetracycline. However, if the released product is recaptured by OxyS, it performs an additional hydroxylation at C(5), producing 5a,11a-dehydrooxytetracycline, which, following the action of OxyR becomes oxytetracycline. This chain is 12-dehydrotetracycline 5-monooxygenase/anhydrotetracycline 6-monooxygenase, found in Streptomyces rimosus subsp. rimosus (strain ATCC 10970 / DSM 40260 / JCM 4667 / NRRL 2234).